The primary structure comprises 599 residues: Elongation factor 4 (599 aa).

Positions 5-187 (SHIRNFSIIA…RLVQTIPAPT (183 aa)) constitute a tr-type G domain. GTP-binding positions include 17–22 (DHGKST) and 134–137 (NKMD).

The protein belongs to the TRAFAC class translation factor GTPase superfamily. Classic translation factor GTPase family. LepA subfamily.

The protein resides in the cell inner membrane. It carries out the reaction GTP + H2O = GDP + phosphate + H(+). Its function is as follows. Required for accurate and efficient protein synthesis under certain stress conditions. May act as a fidelity factor of the translation reaction, by catalyzing a one-codon backward translocation of tRNAs on improperly translocated ribosomes. Back-translocation proceeds from a post-translocation (POST) complex to a pre-translocation (PRE) complex, thus giving elongation factor G a second chance to translocate the tRNAs correctly. Binds to ribosomes in a GTP-dependent manner. The protein is Elongation factor 4 of Ectopseudomonas mendocina (strain ymp) (Pseudomonas mendocina).